A 336-amino-acid polypeptide reads, in one-letter code: Probable carboxylesterase 6 (336 aa).

The interval 1-20 (MGGTKLTHVTTTNPNNSNIH) is disordered. Over residues 7–19 (THVTTTNPNNSNI) the composition is skewed to polar residues. An Involved in the stabilization of the negatively charged intermediate by the formation of the oxyanion hole motif is present at residues 96-98 (HGG). Active-site residues include S176, D276, and H303.

This sequence belongs to the 'GDXG' lipolytic enzyme family. As to expression, expressed in roots, leaves, flowers and siliques.

It catalyses the reaction a carboxylic ester + H2O = an alcohol + a carboxylate + H(+). Its function is as follows. Carboxylesterase acting on esters with varying acyl chain length. This chain is Probable carboxylesterase 6 (CXE6), found in Arabidopsis thaliana (Mouse-ear cress).